The primary structure comprises 650 residues: Primary amine oxidase 1 (650 aa).

A signal peptide spans 1–19 (MNTSILAILFLIQCVFTLG). Residues N2, N34, N62, and N149 are each glycosylated (N-linked (GlcNAc...) asparagine). C155 and C176 are oxidised to a cystine. A glycan (N-linked (GlcNAc...) asparagine) is linked at N235. 308–319 (FMDIGEFGFGRS) lines the substrate pocket. D310 (proton acceptor) is an active-site residue. A disulfide bridge links C329 with C355. 395–400 (LGNYDY) lines the substrate pocket. The active-site Schiff-base intermediate with substrate; via topaquinone is Y398. At Y398 the chain carries 2',4',5'-topaquinone. Cu cation-binding residues include H453 and H455. 2 residues coordinate Mn(2+): D462 and D464. N-linked (GlcNAc...) asparagine glycosylation occurs at N486. Positions 607 and 608 each coordinate Mn(2+). H618 is a binding site for Cu cation.

This sequence belongs to the copper/topaquinone oxidase family. As to quaternary structure, homodimer. It depends on L-topaquinone as a cofactor. Cu cation serves as cofactor. Requires Zn(2+) as cofactor. Mn(2+) is required as a cofactor. Post-translationally, topaquinone (TPQ) is generated by copper-dependent autoxidation of a specific tyrosyl residue. In terms of tissue distribution, expressed in the vascular tissues at the division/differentiation transition zone.

The protein resides in the secreted. The catalysed reaction is a primary methyl amine + O2 + H2O = an aldehyde + H2O2 + NH4(+). Repressed by semi-carbazide, a specific and irreversible inhibitor of copper amine oxidases. Oxidizes preferentially the aliphatic diamine putrescine with production of the corresponding aldehyde, ammonia and hydrogen peroxide. May be involved in the regulation of developmental programmed cell death (PCD) in both vascular tissue and the root cap. Required for jasmonic acid-(MeJA) mediated early protoxylem differentiation associated with putrescine levels reduction and H(2)O(2) accumulation in roots. The protein is Primary amine oxidase 1 of Arabidopsis thaliana (Mouse-ear cress).